The sequence spans 130 residues: Small ribosomal subunit protein uS8 (130 aa).

Belongs to the universal ribosomal protein uS8 family. In terms of assembly, part of the 30S ribosomal subunit. Contacts proteins S5 and S12.

Functionally, one of the primary rRNA binding proteins, it binds directly to 16S rRNA central domain where it helps coordinate assembly of the platform of the 30S subunit. This Neisseria meningitidis serogroup C (strain 053442) protein is Small ribosomal subunit protein uS8.